Here is a 631-residue protein sequence, read N- to C-terminus: Myotonin-protein kinase (631 aa).

Topologically, residues 1-592 are cytoplasmic; it reads MSAEVRLRQL…PRPGLSEARC (592 aa). A Protein kinase domain is found at 71–339; sequence FEILKVIGRG…AGDFQKHPFF (269 aa). Residues 77–85 and K100 each bind ATP; that span reads IGRGAFSEV. Catalysis depends on D195, which acts as the Proton acceptor. 2 positions are modified to phosphoserine; by autocatalysis: S216 and S228. Residue T234 is modified to Phosphothreonine; by autocatalysis. Residues 340–415 enclose the AGC-kinase C-terminal domain; sequence FGLDWEGLRD…CCMAFRDNQV (76 aa). A coiled-coil region spans residues 464-532; that stretch reads AETTVTLQQL…QERMEMLQAP (69 aa). Residues 593-613 traverse the membrane as a helical; Anchor for type IV membrane protein segment; the sequence is LLLFAAALAAAATLGCTGLVA. The Lumenal portion of the chain corresponds to 614–631; the sequence is YTGGLTPVWCFPGATFAP.

The protein belongs to the protein kinase superfamily. AGC Ser/Thr protein kinase family. DMPK subfamily. Homodimer; homodimerization stimulates the kinase activity. Interacts with HSPB2; may enhance DMPK kinase activity. Interacts with PLN; phosphorylates PLN. May interact with RAC1; may regulate DMPK kinase activity. Interacts with LMNA; may regulate nuclear envelope stability. Mg(2+) is required as a cofactor. In terms of processing, phosphorylated. Autophosphorylates. Phosphorylation by RAF1 may result in activation of DMPK. Proteolytic processing of the C-terminus may remove the transmembrane domain and release the kinase from membranes stimulating its activity. In terms of tissue distribution, expressed in all tissues tested, with a predominance in brain, skeletal muscle, heart, and other tissues containing smooth muscle. In the heart, expression is restricted to the cardiomyocytes in the ventricle and atrium.

It localises to the sarcoplasmic reticulum membrane. It is found in the cell membrane. The protein resides in the endoplasmic reticulum membrane. Its subcellular location is the nucleus outer membrane. The protein localises to the mitochondrion outer membrane. It localises to the cytoplasm. It is found in the cytosol. The enzyme catalyses L-seryl-[protein] + ATP = O-phospho-L-seryl-[protein] + ADP + H(+). The catalysed reaction is L-threonyl-[protein] + ATP = O-phospho-L-threonyl-[protein] + ADP + H(+). Its activity is regulated as follows. Coiled-coil-mediated oligomerization enhances the catalytic activity. Proteolytic processing of the C-terminus may release the protein from membranes and constitute a mean to regulate the enzyme. May be regulated by HSPB2, RAC1, RAF1 and G-protein second messengers. Functionally, non-receptor serine/threonine protein kinase which is necessary for the maintenance of skeletal muscle structure and function. May play a role in myocyte differentiation and survival by regulating the integrity of the nuclear envelope and the expression of muscle-specific genes. May also phosphorylate PPP1R12A and inhibit the myosin phosphatase activity to regulate myosin phosphorylation. Also critical to the modulation of cardiac contractility and to the maintenance of proper cardiac conduction activity probably through the regulation of cellular calcium homeostasis. Phosphorylates PLN, a regulator of calcium pumps and may regulate sarcoplasmic reticulum calcium uptake in myocytes. May also phosphorylate FXYD1/PLM which is able to induce chloride currents. May also play a role in synaptic plasticity. The sequence is that of Myotonin-protein kinase (Dmpk) from Mus musculus (Mouse).